We begin with the raw amino-acid sequence, 299 residues long: Acetylglutamate kinase (299 aa).

Substrate contacts are provided by residues 62 to 63 (GG), Arg-84, and Asn-188.

Belongs to the acetylglutamate kinase family. ArgB subfamily.

The protein resides in the cytoplasm. It carries out the reaction N-acetyl-L-glutamate + ATP = N-acetyl-L-glutamyl 5-phosphate + ADP. The protein operates within amino-acid biosynthesis; L-arginine biosynthesis; N(2)-acetyl-L-ornithine from L-glutamate: step 2/4. In terms of biological role, catalyzes the ATP-dependent phosphorylation of N-acetyl-L-glutamate. The protein is Acetylglutamate kinase of Methanosarcina acetivorans (strain ATCC 35395 / DSM 2834 / JCM 12185 / C2A).